The primary structure comprises 307 residues: tRNA dimethylallyltransferase 1 (307 aa).

11–18 (GPTASGKT) lines the ATP pocket. 13-18 (TASGKT) lines the substrate pocket. Interaction with substrate tRNA regions lie at residues 36–39 (DSRQ) and 159–163 (QRAIR).

Belongs to the IPP transferase family. Monomer. It depends on Mg(2+) as a cofactor.

It carries out the reaction adenosine(37) in tRNA + dimethylallyl diphosphate = N(6)-dimethylallyladenosine(37) in tRNA + diphosphate. Functionally, catalyzes the transfer of a dimethylallyl group onto the adenine at position 37 in tRNAs that read codons beginning with uridine, leading to the formation of N6-(dimethylallyl)adenosine (i(6)A). The protein is tRNA dimethylallyltransferase 1 of Parabacteroides distasonis (strain ATCC 8503 / DSM 20701 / CIP 104284 / JCM 5825 / NCTC 11152).